The chain runs to 449 residues: Glycoprotein endo-alpha-1,2-mannosidase (449 aa).

Residues Met-1–Thr-8 are Cytoplasmic-facing. The helical; Signal-anchor for type II membrane protein transmembrane segment at Cys-9 to Leu-29 threads the bilayer. The Lumenal segment spans residues Arg-30–Val-449. The tract at residues Asp-59–Val-449 is catalytic.

This sequence belongs to the glycosyl hydrolase 99 family.

The protein resides in the golgi apparatus membrane. It catalyses the reaction N-{alpha-Glc-(1-&gt;3)-alpha-Man-(1-&gt;2)-alpha-Man-(1-&gt;2)-alpha-Man-(1-&gt;3)-[alpha-Man-(1-&gt;2)-alpha-Man-(1-&gt;3)-[alpha-Man-(1-&gt;2)-alpha-Man-(1-&gt;6)]-alpha-Man-(1-&gt;6)]-beta-Man-(1-&gt;4)-beta-GlcNAc-(1-&gt;4)-beta-GlcNAc}-L-asparaginyl-[protein] + H2O = alpha-D-glucosyl-(1-&gt;3)-D-mannopyranose + N(4)-{alpha-D-Man-(1-&gt;2)-alpha-D-Man-(1-&gt;3)-[alpha-D-Man-(1-&gt;2)-alpha-D-Man-(1-&gt;3)-[alpha-D-Man-(1-&gt;2)-alpha-D-Man-(1-&gt;6)]-alpha-D-Man-(1-&gt;6)]-beta-D-Man-(1-&gt;4)-beta-D-GlaNAc-(1-&gt;4)-beta-D-GlcNAc}-L-asparaginyl-[protein] (N-glucan mannose isomer 8A1,2,3B1,2). In Xenopus laevis (African clawed frog), this protein is Glycoprotein endo-alpha-1,2-mannosidase (manea).